Consider the following 158-residue polypeptide: Transcription antitermination protein NusB (158 aa).

Positions Met1–Lys13 are enriched in polar residues. The tract at residues Met1 to Arg24 is disordered.

It belongs to the NusB family.

In terms of biological role, involved in transcription antitermination. Required for transcription of ribosomal RNA (rRNA) genes. Binds specifically to the boxA antiterminator sequence of the ribosomal RNA (rrn) operons. This chain is Transcription antitermination protein NusB, found in Marinobacter nauticus (strain ATCC 700491 / DSM 11845 / VT8) (Marinobacter aquaeolei).